Reading from the N-terminus, the 274-residue chain is Hematopoietically-expressed homeobox protein hhex (274 aa).

Residues 139-198 constitute a DNA-binding region (homeobox); sequence RKGGQVRFSNDQTIELEKKFETQKYLSPPERKRLAKMLQLSERQVKTWFQNRRAKWRRLK. The tract at residues 197-274 is disordered; that stretch reads LKQENPQGNK…GDKGFYNCAH (78 aa). Positions 237-248 are enriched in polar residues; that stretch reads DEPTSSPTSQET. Residues 249–263 are compositionally biased toward acidic residues; that stretch reads LDSEVSDDSDQEVDI.

Expressed in the most dorsoanterior endomesoderm of the blastula and gastrula embryo, and later is restricted to the forming liver diverticulum.

It is found in the nucleus. Its function is as follows. Recognizes the DNA sequence 5'-ATTAA-3'. Transcriptional repressor. Regulates the differentiation of both endothelial and blood cells. Probably plays a role in the proliferation of vascular endothelial cells during blood vessel development. Establishes anterior identity at two levels; acts early to enhance canonical wnt-signaling by repressing expression of tle4, and acts later to inhibit nodal-signaling by directly targeting nodal/nr1 and nodal2/nr2. May play a role in liver development. Induces heart development. This chain is Hematopoietically-expressed homeobox protein hhex, found in Xenopus tropicalis (Western clawed frog).